The primary structure comprises 637 residues: Chaperone protein HtpG (637 aa).

The interval 1–338 (MMELKMHNVK…SPDLPLNISR (338 aa)) is a; substrate-binding. The interval 339 to 558 (ETLQNNRVVE…EGAMDLRMER (220 aa)) is b. Residues 493–512 (KFSPEEKDKENKSDEERAEG) form a disordered region. The c stretch occupies residues 559-637 (FLREQNQLNY…LNNLLGKVII (79 aa)).

It belongs to the heat shock protein 90 family. Homodimer.

It localises to the cytoplasm. In terms of biological role, molecular chaperone. Has ATPase activity. The chain is Chaperone protein HtpG from Wolbachia sp. subsp. Brugia malayi (strain TRS).